The sequence spans 778 residues: Endonuclease MutS2 (778 aa).

ATP is bound at residue 328-335 (GPNTGGKT). The 76-residue stretch at 702–777 (LDLRGKRYEE…GSGATIVTFK (76 aa)) folds into the Smr domain.

The protein belongs to the DNA mismatch repair MutS family. MutS2 subfamily. In terms of assembly, homodimer. Binds to stalled ribosomes, contacting rRNA.

Functionally, endonuclease that is involved in the suppression of homologous recombination and thus may have a key role in the control of bacterial genetic diversity. Acts as a ribosome collision sensor, splitting the ribosome into its 2 subunits. Detects stalled/collided 70S ribosomes which it binds and splits by an ATP-hydrolysis driven conformational change. Acts upstream of the ribosome quality control system (RQC), a ribosome-associated complex that mediates the extraction of incompletely synthesized nascent chains from stalled ribosomes and their subsequent degradation. Probably generates substrates for RQC. The sequence is that of Endonuclease MutS2 from Streptococcus pneumoniae (strain P1031).